The chain runs to 324 residues: DGAT1/2-independent enzyme synthesizing storage lipids (324 aa).

At 1–50 (MIDKNQTCGVGQDSVPYMICLIHILEEWFGVEQLEDYLNFANYLLWVFTP) the chain is on the lumenal side. Asn5 carries an N-linked (GlcNAc...) asparagine glycan. A helical transmembrane segment spans residues 51–71 (LILLILPYFTIFLLYLTIIFL). The Cytoplasmic segment spans residues 72–125 (HIYKRKNVLKEAYSHNLWDGARKTVATLWDGHAAVWHGYEVHGMEKIPEDGPAL). The helical transmembrane segment at 126–146 (IIFYHGAIPIDFYYFMAKIFI) threads the bilayer. His130 is an active-site residue. Over 147-324 (HKGRTCRVVA…IMSALLERFH (178 aa)) the chain is Lumenal.

This sequence belongs to the diacylglycerol acyltransferase family. Highly divergent.

It localises to the endoplasmic reticulum membrane. It carries out the reaction a 1,2-diacylglycerol + a 1,2-diacyl-sn-glycero-3-phosphocholine = a triacylglycerol + a 1-acyl-sn-glycero-3-phosphocholine. The enzyme catalyses a 1-O-alkyl-2-acyl-sn-glycero-3-phosphocholine + a 1,2-diacylglycerol = a 1-O-alkyl-sn-glycero-3-phosphocholine + a triacylglycerol. The catalysed reaction is a 2-acylglycerol + an acyl-CoA = a 1,2-diacylglycerol + CoA. It catalyses the reaction an acyl-CoA + a 1,2-diacyl-sn-glycerol = a triacyl-sn-glycerol + CoA. It carries out the reaction 2-(9Z-octadecenoyl)-glycerol + (9Z)-octadecenoyl-CoA = 1,2-di-(9Z-octadecenoyl)-glycerol + CoA. The enzyme catalyses 1,2-di-(9Z-octadecenoyl)-sn-glycerol + (9Z)-octadecenoyl-CoA = 1,2,3-tri-(9Z-octadecenoyl)-glycerol + CoA. Acyltransferase activity is specifically inhibited by TMX1 at the endoplasmic reticulum, restricting accumulation of triacylglycerol. Functionally, catalytic subunit of the alternative triglyceride biosynthesis pathway, which mediates formation of triacylglycerol from diacylglycerol and membrane phospholipids. Synthesizes triacylglycerol at the expense of membrane phospholipids, such as phosphatidylcholine (PC) and its ether-linked form (ePC), thereby altering the composition of membranes. The alternative triglyceride biosynthesis pathway is probably required to provide the energy required for rapid growth when fuel sources are limiting. It maintains mitochondrial function during periods of extracellular lipid starvation. Can also use acyl-CoA as donor: acts as a acyl-CoA:monoacylglycerol acyltransferase (MGAT), but also shows acyl-CoA:diacylglycerol acyltransferase (DGAT) activity. This chain is DGAT1/2-independent enzyme synthesizing storage lipids, found in Homo sapiens (Human).